Here is a 209-residue protein sequence, read N- to C-terminus: LexA repressor (209 aa).

A DNA-binding region (H-T-H motif) is located at residues 30-50 (RVEIAREIGFKSPNAAEEHLK). Catalysis depends on for autocatalytic cleavage activity residues S126 and K163.

It belongs to the peptidase S24 family. In terms of assembly, homodimer.

It carries out the reaction Hydrolysis of Ala-|-Gly bond in repressor LexA.. In terms of biological role, represses a number of genes involved in the response to DNA damage (SOS response), including recA and lexA. In the presence of single-stranded DNA, RecA interacts with LexA causing an autocatalytic cleavage which disrupts the DNA-binding part of LexA, leading to derepression of the SOS regulon and eventually DNA repair. The chain is LexA repressor from Glaesserella parasuis serovar 5 (strain SH0165) (Haemophilus parasuis).